The following is a 969-amino-acid chain: Leucine--tRNA ligase (969 aa).

The short motif at 45–55 (PYTNAPLHIGH) is the 'HIGH' region element. The short motif at 649-653 (KMSKS) is the 'KMSKS' region element. Residue Lys-652 coordinates ATP.

This sequence belongs to the class-I aminoacyl-tRNA synthetase family.

It is found in the cytoplasm. It catalyses the reaction tRNA(Leu) + L-leucine + ATP = L-leucyl-tRNA(Leu) + AMP + diphosphate. The polypeptide is Leucine--tRNA ligase (Staphylothermus marinus (strain ATCC 43588 / DSM 3639 / JCM 9404 / F1)).